The sequence spans 330 residues: Probable transposase for insertion sequence element ISH11 (330 aa).

Belongs to the transposase 11 family.

Its function is as follows. Involved in the transposition of the insertion sequence ISH11. In Halobacterium salinarum (strain ATCC 29341 / DSM 671 / R1), this protein is Probable transposase for insertion sequence element ISH11.